The primary structure comprises 353 residues: MAAAEAANCIMEVSCGQAESSEKPNAEDMTSKDYYFDSYAHFGIHEEMLKDEVRTLTYRNSMFHNRHLFKDKVVLDVGSGTGILCMFAAKAGARKVIGIECSSISDYAVKIVKANKLDHVVTIIKGKVEEVELPVEKVDIIISEWMGYCLFYESMLNTVLHARDKWLAPDGLIFPDRATLYVTAIEDRQYKDYKIHWWENVYGFDMSCIKDVAIKEPLVDVVDPKQLVTNACLIKEVDIYTVKVEDLTFTSPFCLQVKRNDYVHALVAYFNIEFTRCHKRTGFSTSPESPYTHWKQTVFYMEDYLTVKTGEEIFGTIGMRPNAKNNRDLDFTIDLDFKGQLCELSCSTDYRMR.

The region spanning 32–353 (KDYYFDSYAH…LSCSTDYRMR (322 aa)) is the SAM-dependent MTase PRMT-type domain. S-adenosyl-L-methionine contacts are provided by histidine 45, arginine 54, glycine 78, and glutamate 100. Position 116 is an N6-succinyllysine (lysine 116). Lysine 127 participates in a covalent cross-link: Glycyl lysine isopeptide (Lys-Gly) (interchain with G-Cter in ubiquitin). Glutamate 129 serves as a coordination point for S-adenosyl-L-methionine. Active-site residues include glutamate 144 and glutamate 153. 2 positions are modified to N6-acetyllysine: lysine 210 and lysine 215. 2 positions are modified to phosphoserine: serine 286 and serine 289.

It belongs to the class I-like SAM-binding methyltransferase superfamily. Protein arginine N-methyltransferase family. As to quaternary structure, homodimer and heterodimer with PRMT8. Homooctamer; individual homodimers associates to form a homooctamer. Interacts with NFATC2IP. Interacts with ILF3 and SUPT5H. Individual homodimers can associate to form a homohexamer. Interacts with FOXO1; the interaction methylates FOXO1, retaining it in the nucleus and increasing its transcriptional activity. Methylation of FOXO1 is increased with oxidative stress. Interacts with CHTOP; the interaction methylates CHTOP, enabling its interaction with the 5FMC complex. Interacts with BTG1, BTG2 and IFNAR1. Interacts with and probably methylates ATXN2L. Component of the methylosome, a 20S complex containing at least CLNS1A/pICln, PRMT5/SKB1, WDR77/MEP50, PRMT1 and ERH. Interacts with DHX9 (via RGG region). Interacts (via N-terminus) with HABP4. Interacts with MAP3K5/ASK1; the interaction results in MAP3K5 methylation by PRMT1 which inhibits MAP3K5 activation. Interacts with TRIM48; the interaction results in ubiquitination of PRMT1 by TRIM48, leading to PRMT1 proteasomal degradation and activation of MAP3K5. Interacts with GATOR1 complex; this interaction is S-adenosyl-L-methionine (SAM) dependent and is perturbated by SAMTOR in a SAM-sensitive manner. Interacts with GFI1; promoting recognition and binding of MRE11 and TP53BP1 substrates by PRMT1. Post-translationally, polyubiquitinated at Lys-127 by the SCF(FBXL17) complex, leading to its subsequent degradation. Ubiquitination is regulated by acetylation at Lys-210 and Lys-215. Polyubiquitinated by E3 ubiquitin-protein ligase TRIM48, leading to suppression of MAP3K5/ASK1 methylation and subsequent MAP3K5 activation. In terms of processing, acetylation at Lys-210 and Lys-215 regulates ubiquitination by the SCF(FBXL17) complex. Acetylated at Lys-215 by p300/EP300. Deacetylated at Lys-210 and Lys-215 by SIRT1. Ubiquitous.

The protein resides in the nucleus. The protein localises to the nucleoplasm. It is found in the cytoplasm. It localises to the cytosol. Its subcellular location is the lysosome membrane. It carries out the reaction L-arginyl-[protein] + 2 S-adenosyl-L-methionine = N(omega),N(omega)-dimethyl-L-arginyl-[protein] + 2 S-adenosyl-L-homocysteine + 2 H(+). The catalysed reaction is L-arginyl-[protein] + S-adenosyl-L-methionine = N(omega)-methyl-L-arginyl-[protein] + S-adenosyl-L-homocysteine + H(+). The enzyme catalyses N(omega)-methyl-L-arginyl-[protein] + S-adenosyl-L-methionine = N(omega),N(omega)-dimethyl-L-arginyl-[protein] + S-adenosyl-L-homocysteine + H(+). Arginine methyltransferase that methylates (mono and asymmetric dimethylation) the guanidino nitrogens of arginyl residues present in proteins such as ESR1, histone H2, H3 and H4, FMR1, ILF3, HNRNPA1, HNRNPD, NFATC2IP, SUPT5H, TAF15, EWS, HABP4, SERBP1, RBM15, FOXO1, CHTOP, MAP3K5/ASK1 and MICU1. Constitutes the main enzyme that mediates monomethylation and asymmetric dimethylation of histone H4 'Arg-3' (H4R3me1 and H4R3me2a, respectively), a specific tag for epigenetic transcriptional activation. May be involved in the regulation of TAF15 transcriptional activity, act as an activator of estrogen receptor (ER)-mediated transactivation, play a key role in neurite outgrowth and act as a negative regulator of megakaryocytic differentiation, by modulating p38 MAPK pathway. Methylates RBM15, promoting ubiquitination and degradation of RBM15. Methylates MRE11 and TP53BP1, promoting the DNA damage response. Methylates FOXO1 and retains it in the nucleus increasing its transcriptional activity. Methylates CHTOP and this methylation is critical for its 5-hydroxymethylcytosine (5hmC)-binding activity. Methylates MAP3K5/ASK1 at 'Arg-85' and 'Arg-87' which promotes association of MAP3K5 with thioredoxin and negatively regulates MAP3K5 association with TRAF2, inhibiting MAP3K5 stimulation and MAP3K5-induced activation of JNK. Methylates H4R3 in genes involved in glioblastomagenesis in a CHTOP- and/or TET1-dependent manner. Plays a role in regulating alternative splicing in the heart. Methylates NPRL2 at 'Arg-78' leading to inhibition of its GTPase activator activity and then the GATOR1 complex and consequently inducing timely mTORC1 activation under methionine-sufficient conditions. The sequence is that of Protein arginine N-methyltransferase 1 from Rattus norvegicus (Rat).